A 441-amino-acid chain; its full sequence is tRNA-2-methylthio-N(6)-dimethylallyladenosine synthase (441 aa).

Residues K5–E121 enclose the MTTase N-terminal domain. 6 residues coordinate [4Fe-4S] cluster: C14, C50, C84, C159, C163, and C166. The 231-residue stretch at A145 to A375 folds into the Radical SAM core domain. Residues R378–H440 enclose the TRAM domain.

The protein belongs to the methylthiotransferase family. MiaB subfamily. Monomer. The cofactor is [4Fe-4S] cluster.

The protein localises to the cytoplasm. The enzyme catalyses N(6)-dimethylallyladenosine(37) in tRNA + (sulfur carrier)-SH + AH2 + 2 S-adenosyl-L-methionine = 2-methylsulfanyl-N(6)-dimethylallyladenosine(37) in tRNA + (sulfur carrier)-H + 5'-deoxyadenosine + L-methionine + A + S-adenosyl-L-homocysteine + 2 H(+). In terms of biological role, catalyzes the methylthiolation of N6-(dimethylallyl)adenosine (i(6)A), leading to the formation of 2-methylthio-N6-(dimethylallyl)adenosine (ms(2)i(6)A) at position 37 in tRNAs that read codons beginning with uridine. This is tRNA-2-methylthio-N(6)-dimethylallyladenosine synthase from Citrifermentans bemidjiense (strain ATCC BAA-1014 / DSM 16622 / JCM 12645 / Bem) (Geobacter bemidjiensis).